The sequence spans 327 residues: MFALSSLVSEGDPEVTSRYVKGVQLALDLSENTPGQFKLIETPLNSFLLVSNVMPEVQPICSGLPALRPDFSNLHLPRLEKLQRVLGQGFGAAGEEIALDPSHVETHEKGQVFYNHYATEEWTWALTLNKDALLREAVDGLCDPGTWKGLLPDDPLPLLWLLFNGPASFCRADCCLYKQHCGYPGPVLLPGHMYAPKRDLLSFVNHALKYTKFLYGDFSGTWAAACRPPFATSRIQRVVSQMKIIDASDTYISHTCLLCHIYQQNSIIAGQGTHVGGILLLSGKGTQYITGNVQTQRCPTTGDYLIIPSYDIPAIITMIKENGLNQL.

This sequence belongs to the herpesviridae UL95 family. As to quaternary structure, interacts with ORF24; this interaction may serve as a core scaffold for the assembly of the viral transcription initiation complex. Interacts with ORF66. Interacts with ORF18. Interacts with ORF23. Interacts with ORF31. Interacts with host EPAS1; this interaction stabilizes host EPAS1, ensuring its transcriptional activity.

The protein resides in the host nucleus. Functionally, participates in the expression of late viral mRNAs in part by interacting with ORF24. Expressed before viral DNA replication, assembles at the viral pre-replication complexes (pre-RCs) and thus serves as a hub for recruiting a viral transcription complex to ORF24 to promote late viral gene expression. Also plays a regulatory role in the viral life cycle by regulating host transcriptional regulators HIF1A and EPAS1. The sequence is that of Protein UL95 homolog (ORF34) from Homo sapiens (Human).